The chain runs to 349 residues: tRNA N6-adenosine threonylcarbamoyltransferase (349 aa).

Positions 115 and 119 each coordinate Fe cation. Substrate is bound by residues 137–141 (LASGG), Asp-170, Gly-183, and Asn-281. Residue Asp-309 participates in Fe cation binding.

The protein belongs to the KAE1 / TsaD family. The cofactor is Fe(2+).

The protein localises to the cytoplasm. It catalyses the reaction L-threonylcarbamoyladenylate + adenosine(37) in tRNA = N(6)-L-threonylcarbamoyladenosine(37) in tRNA + AMP + H(+). Its function is as follows. Required for the formation of a threonylcarbamoyl group on adenosine at position 37 (t(6)A37) in tRNAs that read codons beginning with adenine. Is involved in the transfer of the threonylcarbamoyl moiety of threonylcarbamoyl-AMP (TC-AMP) to the N6 group of A37, together with TsaE and TsaB. TsaD likely plays a direct catalytic role in this reaction. This chain is tRNA N6-adenosine threonylcarbamoyltransferase, found in Methylobacterium nodulans (strain LMG 21967 / CNCM I-2342 / ORS 2060).